The primary structure comprises 1325 residues: ATP-binding cassette sub-family C member 4 (1325 aa).

6 helical membrane passes run 93–113, 136–156, 205–225, 227–247, 322–342, and 351–371; these read LILG…PLFL, GYAA…HLYF, FDQV…AIAV, VLLW…LVIL, ASFF…YVLL, and VFVA…FFPS. The ABC transmembrane type-1 1 domain occupies 93 to 377; it reads LILGIFTLIE…FFPSAIERGS (285 aa). The 224-residue stretch at 410 to 633 folds into the ABC transporter 1 domain; the sequence is VHVQDFTAFW…GVDFGSLLKK (224 aa). 445 to 452 contacts ATP; sequence GPVGAGKS. 2 positions are modified to phosphothreonine: Thr646 and Thr648. A compositionally biased stretch (polar residues) spans 657 to 667; sequence ASIWSQQSSRP. The disordered stretch occupies residues 657–690; the sequence is ASIWSQQSSRPSLKDGAPEGQDAENTQAVQPEES. Residues Ser664 and Ser668 each carry the phosphoserine modification. 5 helical membrane-spanning segments follow: residues 710–730, 761–781, 849–869, 954–974, and 977–997; these read SWFF…FYVL, LSWY…FGIA, LVVS…IPLV, AICA…AKTL, and GQVG…QWSV. Positions 714–1005 constitute an ABC transmembrane type-1 2 domain; it reads IIFLVLLNMV…SVRQSAEVEN (292 aa). An ABC transporter 2 domain is found at 1041-1274; it reads IVFDNVNFTY…PESLFYKMVQ (234 aa). Residue 1075–1082 coordinates ATP; the sequence is GRTGAGKS. A PDZ-binding motif is present at residues 1322–1325; that stretch reads ETAL.

Interacts (via PDZ-binding motif) with SNX27 (via PDZ domain); this interaction accelerates MRP4 internalization. The cofactor is Mg(2+). N-glycosylated; leading to substrate-selective effects on its transport activity.

It localises to the basolateral cell membrane. The protein localises to the apical cell membrane. It carries out the reaction ATP + H2O + xenobioticSide 1 = ADP + phosphate + xenobioticSide 2.. It catalyses the reaction an S-substituted glutathione(in) + ATP + H2O = an S-substituted glutathione(out) + ADP + phosphate + H(+). The catalysed reaction is 17beta-estradiol 17-O-(beta-D-glucuronate)(in) + ATP + H2O = 17beta-estradiol 17-O-(beta-D-glucuronate)(out) + ADP + phosphate + H(+). The enzyme catalyses dehydroepiandrosterone 3-sulfate(in) + ATP + H2O = dehydroepiandrosterone 3-sulfate(out) + ADP + phosphate + H(+). It carries out the reaction leukotriene C4(in) + ATP + H2O = leukotriene C4(out) + ADP + phosphate + H(+). It catalyses the reaction leukotriene B4(in) + ATP + H2O = leukotriene B4(out) + ADP + phosphate + H(+). The catalysed reaction is urate(in) + ATP + H2O = urate(out) + ADP + phosphate + H(+). The enzyme catalyses 3',5'-cyclic GMP(in) + ATP + H2O = 3',5'-cyclic GMP(out) + ADP + phosphate + H(+). It carries out the reaction 3',5'-cyclic AMP(in) + ATP + H2O = 3',5'-cyclic AMP(out) + ADP + phosphate + H(+). It catalyses the reaction prostaglandin E2(in) + ATP + H2O = prostaglandin E2(out) + ADP + phosphate + H(+). The catalysed reaction is prostaglandin E1(in) + ATP + H2O = prostaglandin E1(out) + ADP + phosphate + H(+). The enzyme catalyses glycodeoxycholate(in) + glutathione(in) + ATP + H2O = glycodeoxycholate(out) + glutathione(out) + ADP + phosphate + H(+). It carries out the reaction cholate(in) + glutathione(in) + ATP + H2O = cholate(out) + glutathione(out) + ADP + phosphate + H(+). It catalyses the reaction glycocholate(in) + glutathione(in) + ATP + H2O = glycocholate(out) + glutathione(out) + ADP + phosphate + H(+). The catalysed reaction is taurocholate(in) + glutathione(in) + ATP + H2O = taurocholate(out) + glutathione(out) + ADP + phosphate + H(+). The enzyme catalyses glycochenodeoxycholate(in) + glutathione(in) + ATP + H2O = glycochenodeoxycholate(out) + glutathione(out) + ADP + phosphate + H(+). It carries out the reaction taurochenodeoxycholate(in) + glutathione(in) + ATP + H2O = taurochenodeoxycholate(out) + glutathione(out) + ADP + phosphate + H(+). It catalyses the reaction glycoursodeoxycholate(in) + glutathione(in) + ATP + H2O = glycoursodeoxycholate(out) + glutathione(out) + ADP + phosphate + H(+). The catalysed reaction is tauroursodeoxycholate(in) + glutathione(in) + ATP + H2O = tauroursodeoxycholate(out) + glutathione(out) + ADP + phosphate + H(+). ATP-dependent transporter of the ATP-binding cassette (ABC) family that actively extrudes physiological compounds and xenobiotics from cells. Transports a range of endogenous molecules that have a key role in cellular communication and signaling, including cyclic nucleotides such as cyclic AMP (cAMP) and cyclic GMP (cGMP), bile acids, steroid conjugates, urate, and prostaglandins. Also mediates the ATP-dependent efflux of glutathione conjugates such as leukotriene C4 (LTC4) and leukotriene B4 (LTB4). The presence of GSH is necessary for the ATP-dependent transport of LTB4, whereas GSH is not required for the transport of LTC4. Mediates the cotransport of bile acids with reduced glutathione (GSH). Transports a wide range of drugs and their metabolites, including anticancer, antiviral and antibiotics molecules. Confers resistance to anticancer agents. The sequence is that of ATP-binding cassette sub-family C member 4 from Mus musculus (Mouse).